The chain runs to 340 residues: Solute-binding protein Dde_0634 (340 aa).

Residues 1–29 (MKSTFAALLIMVGCLVSGALLTGSEAAAA) form the signal peptide. (indol-3-yl)acetate-binding positions include tyrosine 99, arginine 172, 210–213 (TSLD), and tyrosine 235.

It belongs to the bacterial solute-binding protein 7 family. The complex is comprised of an extracytoplasmic solute-binding protein and a heteromeric permease formed by two transmembrane proteins.

The protein resides in the periplasm. Solute-binding protein that binds indole-3-pyruvate and indole-3-acetate (in vitro). Can also bind D-tryptophan (in vitro), but that is probably not a physiological ligand. Probably part of a tripartite ATP-independent periplasmic (TRAP) transport system that mediates solute transport into the cytoplasm. This Oleidesulfovibrio alaskensis (strain ATCC BAA-1058 / DSM 17464 / G20) (Desulfovibrio alaskensis) protein is Solute-binding protein Dde_0634.